A 195-amino-acid chain; its full sequence is PABIR family member 1 (195 aa).

It belongs to the FAM122 family.

This Homo sapiens (Human) protein is PABIR family member 1.